The sequence spans 217 residues: UPF0502 protein swp_3027 (217 aa).

This sequence belongs to the UPF0502 family.

This is UPF0502 protein swp_3027 from Shewanella piezotolerans (strain WP3 / JCM 13877).